An 84-amino-acid chain; its full sequence is MVIIRLARGGSKKRPFYNIVATDSRNRRDGRFIERVGFYNPVATKGEALRIAQDRLTYWQGVGAQLSPTVERLVKQAQKAQPAA.

The protein belongs to the bacterial ribosomal protein bS16 family.

The sequence is that of Small ribosomal subunit protein bS16 from Burkholderia mallei (strain NCTC 10247).